Consider the following 262-residue polypeptide: MEYFDAHCHLNCEPLLSEIEKSIANFKLINLKANVVGTDLDNSKIAVELAKKYPDLLKATIGIHPNDVHLVDFKKTKKQLNELLINNRNFISCIGEYGFDYHYTTEFIELQNKFFEMQFEIAETNKLVHMLHIRDAHEKIYEILTRLKPTQPVIFHCFSQDINIAKKLLSLKDLNIDIFFSIPGIVTFKNAQALHEALKIIPSELLLSETDSPWLTPSPFRGKVNWPEYVVHTVSTVAEIKKIEIAEMKRIIVKNAKKLFWH.

A divalent metal cation contacts are provided by histidine 7, histidine 9, glutamate 96, histidine 132, histidine 156, and aspartate 211.

It belongs to the metallo-dependent hydrolases superfamily. TatD-type hydrolase family. The cofactor is a divalent metal cation.

This is an uncharacterized protein from Mycoplasma genitalium (strain ATCC 33530 / DSM 19775 / NCTC 10195 / G37) (Mycoplasmoides genitalium).